A 216-amino-acid chain; its full sequence is NKG2-D type II integral membrane protein (216 aa).

Over 1–51 (MGWIRGRRSRHSWEMSEFHNYNLDLAKNDFSTRWQKQRCPVIKSKCRENTS) the chain is Cytoplasmic. A helical; Signal-anchor for type II membrane protein transmembrane segment spans residues 52–72 (PLFFCCFIAVAMGIRFIVMVT). Topologically, residues 73–216 (IWSAVFLNSL…NTYICMQRTV (144 aa)) are extracellular. 2 disulfides stabilise this stretch: cysteine 96–cysteine 105 and cysteine 99–cysteine 110. Residues 98 to 213 (PCPKNWICYK…STPNTYICMQ (116 aa)) form the C-type lectin domain. N-linked (GlcNAc...) asparagine glycans are attached at residues asparagine 115, asparagine 131, asparagine 163, and asparagine 202. 2 disulfides stabilise this stretch: cysteine 127-cysteine 211 and cysteine 189-cysteine 203.

In terms of assembly, homodimer; disulfide-linked. Heterohexamer composed of two subunits of KLRK1 and four subunits of HCST/DAP10. Interacts (via transmembrane domain) with HCST/DAP10 (via transmembrane domain); the interaction is required for KLRK1 NK cell surface and induces NK cell-mediated cytotoxicity. Can form disulfide-bonded heterodimer with CD94. Interacts with CEACAM1; recruits PTPN6 that dephosphorylates VAV1.

It localises to the cell membrane. Its function is as follows. Functions as an activating and costimulatory receptor involved in immunosurveillance upon binding to various cellular stress-inducible ligands displayed at the surface of autologous tumor cells and virus-infected cells. Provides both stimulatory and costimulatory innate immune responses on activated killer (NK) cells, leading to cytotoxic activity. Acts as a costimulatory receptor for T-cell receptor (TCR) in CD8(+) T-cell-mediated adaptive immune responses by amplifying T-cell activation. Stimulates perforin-mediated elimination of ligand-expressing tumor cells. Signaling involves calcium influx, culminating in the expression of TNF-alpha. Participates in NK cell-mediated bone marrow graft rejection. May play a regulatory role in differentiation and survival of NK cells. Binds to ligands belonging to various subfamilies of MHC class I-related glycoproteins. This is NKG2-D type II integral membrane protein (KLRK1) from Pongo pygmaeus (Bornean orangutan).